Reading from the N-terminus, the 469-residue chain is Aspartyl/glutamyl-tRNA(Asn/Gln) amidotransferase subunit B (469 aa).

Belongs to the GatB/GatE family. GatB subfamily. Heterotrimer of A, B and C subunits.

The catalysed reaction is L-glutamyl-tRNA(Gln) + L-glutamine + ATP + H2O = L-glutaminyl-tRNA(Gln) + L-glutamate + ADP + phosphate + H(+). The enzyme catalyses L-aspartyl-tRNA(Asn) + L-glutamine + ATP + H2O = L-asparaginyl-tRNA(Asn) + L-glutamate + ADP + phosphate + 2 H(+). In terms of biological role, allows the formation of correctly charged Asn-tRNA(Asn) or Gln-tRNA(Gln) through the transamidation of misacylated Asp-tRNA(Asn) or Glu-tRNA(Gln) in organisms which lack either or both of asparaginyl-tRNA or glutaminyl-tRNA synthetases. The reaction takes place in the presence of glutamine and ATP through an activated phospho-Asp-tRNA(Asn) or phospho-Glu-tRNA(Gln). This Thermus thermophilus (strain ATCC 27634 / DSM 579 / HB8) protein is Aspartyl/glutamyl-tRNA(Asn/Gln) amidotransferase subunit B.